The sequence spans 474 residues: 6-phospho-beta-galactosidase (474 aa).

D-galactose 6-phosphate-binding residues include Gln18, His115, Asn159, Glu160, and Asn296. The Proton donor role is filled by Glu160. The active-site Nucleophile is Glu374. D-galactose 6-phosphate contacts are provided by Ser427, Trp428, Lys434, and Tyr436.

The protein belongs to the glycosyl hydrolase 1 family.

It carries out the reaction a 6-phospho-beta-D-galactoside + H2O = D-galactose 6-phosphate + an alcohol. Its pathway is carbohydrate metabolism; lactose degradation; D-galactose 6-phosphate and beta-D-glucose from lactose 6-phosphate: step 1/1. This Clostridium acetobutylicum (strain ATCC 824 / DSM 792 / JCM 1419 / IAM 19013 / LMG 5710 / NBRC 13948 / NRRL B-527 / VKM B-1787 / 2291 / W) protein is 6-phospho-beta-galactosidase.